A 146-amino-acid chain; its full sequence is Ferredoxin-thioredoxin reductase catalytic chain, chloroplastic (146 aa).

The N-terminal 31 residues, 1-31, are a transit peptide targeting the chloroplast; it reads MNLQAVSCSFGFLSSPLGVTPRTSFRRFVIR. C85 serves as a coordination point for [4Fe-4S] cluster. C87 functions as the Nucleophile in the catalytic mechanism. The cysteines at positions 87 and 117 are disulfide-linked. 3 residues coordinate [4Fe-4S] cluster: C104, C106, and C115.

Belongs to the ferredoxin thioredoxin reductase beta subunit family. In terms of assembly, heterodimer of subunit A (variable subunit) and subunit B (catalytic subunit). Heterodimeric FTR forms a complex with ferredoxin and thioredoxin. Requires [4Fe-4S] cluster as cofactor.

It localises to the plastid. It is found in the chloroplast. It carries out the reaction [thioredoxin]-disulfide + 2 reduced [2Fe-2S]-[ferredoxin] + 2 H(+) = [thioredoxin]-dithiol + 2 oxidized [2Fe-2S]-[ferredoxin]. Catalytic subunit of the ferredoxin-thioredoxin reductase (FTR), which catalyzes the two-electron reduction of thioredoxins by the electrons provided by reduced ferredoxin. This is Ferredoxin-thioredoxin reductase catalytic chain, chloroplastic from Arabidopsis thaliana (Mouse-ear cress).